A 361-amino-acid polypeptide reads, in one-letter code: sn-glycerol-3-phosphate import ATP-binding protein UgpC (361 aa).

The 232-residue stretch at 4-235 folds into the ABC transporter domain; sequence LSLKGIRKSY…PETVFVAGFI (232 aa). 37–44 lines the ATP pocket; the sequence is GPSGCGKS.

It belongs to the ABC transporter superfamily. sn-glycerol-3-phosphate importer (TC 3.A.1.1.3) family. The complex is composed of two ATP-binding proteins (UgpC), two transmembrane proteins (UgpA and UgpE) and a solute-binding protein (UgpB).

The protein localises to the cell inner membrane. The catalysed reaction is sn-glycerol 3-phosphate(out) + ATP + H2O = sn-glycerol 3-phosphate(in) + ADP + phosphate + H(+). Part of the ABC transporter complex UgpBAEC involved in sn-glycerol-3-phosphate (G3P) import. Responsible for energy coupling to the transport system. The polypeptide is sn-glycerol-3-phosphate import ATP-binding protein UgpC (Burkholderia ambifaria (strain ATCC BAA-244 / DSM 16087 / CCUG 44356 / LMG 19182 / AMMD) (Burkholderia cepacia (strain AMMD))).